Consider the following 97-residue polypeptide: YcgL domain-containing protein PFL_1496 (97 aa).

Positions 3–87 (RICSIYKSPR…AEDEYIEHLP (85 aa)) constitute a YcgL domain.

The protein is YcgL domain-containing protein PFL_1496 of Pseudomonas fluorescens (strain ATCC BAA-477 / NRRL B-23932 / Pf-5).